The primary structure comprises 570 residues: MGKGSKQITHSEWASGDSYSASAGAGGGKGGDNAPFKRLPFNFCSLSLQPFAHPVCTPSGTIFDLTNILPWIKKHGKNPVDGTPLKNSDLIKLNIAKNESGDYVDPVTYKVLTDNTHIVALRNTGNVFAWDTVERLNIKGKLWRDLVTDEEFGRKDIITLQDPQNIESRNLSSFNYLKEGESVPGQKEEESNVNASALGSSAKILKAKEAVAKARSERAQRADSSAVTKKADGSTTTSTQSKTASFQSGKPTPYNAAKYTTGMAAASFTSTGLTPHTSAELALLSDEEYMLKRGRVKQKGYARISTTSGDINLELQTEYAPKAVWNFIKLAKKGYYKDVTFHRNIKGFMIQGGDPSGTGRGGESIWGKYFNDEFEGPLKHDSRGTLSMANKGKNTNSSQFFIAYRALPHLNNKHTIFGHVIDDPTPSSTTLNNLETHPVNSSTNRPTPDIRITDVTIFVDPFEEFLNQKKAEEASGKNKKVDPTEEDRETQQEDDDQVTWTGKRVRGPGSTAAGGDAGSGVGKYLKAALANQTTQEEDEIVEFVDEEPEPEPMRKKFKSRGGFGDFSSWD.

In terms of domain architecture, U-box spans 37-110; it reads KRLPFNFCSL…GDYVDPVTYK (74 aa). Disordered regions lie at residues 215-253, 428-449, and 469-570; these read RSERAQRADSSAVTKKADGSTTTSTQSKTASFQSGKPTP, STTLNNLETHPVNSSTNRPTPD, and KKAE…SSWD. Over residues 234-248 the composition is skewed to low complexity; that stretch reads STTTSTQSKTASFQS. Residues 298 to 457 form the PPIase cyclophilin-type domain; it reads QKGYARISTT…PDIRITDVTI (160 aa). A compositionally biased stretch (polar residues) spans 428–446; it reads STTLNNLETHPVNSSTNRP. Residues 469–483 are compositionally biased toward basic and acidic residues; it reads KKAEEASGKNKKVDP. 2 stretches are compositionally biased toward acidic residues: residues 484–497 and 535–550; these read TEEDRETQQEDDDQ and QEEDEIVEFVDEEPEP.

It belongs to the cyclophilin-type PPIase family. PPIL2 subfamily.

The protein resides in the nucleus. It carries out the reaction [protein]-peptidylproline (omega=180) = [protein]-peptidylproline (omega=0). It catalyses the reaction S-ubiquitinyl-[E2 ubiquitin-conjugating enzyme]-L-cysteine + [acceptor protein]-L-lysine = [E2 ubiquitin-conjugating enzyme]-L-cysteine + N(6)-ubiquitinyl-[acceptor protein]-L-lysine.. In terms of biological role, may catalyze the cis-trans isomerization of proline imidic peptide bonds in oligopeptides thereby assisting the folding of proteins. May also function as a chaperone, playing a role in intracellular transport of proteins. May also have a protein ubiquitin ligase activity acting as an E3 ubiquitin protein ligase or as a ubiquitin-ubiquitin ligase promoting elongation of ubiquitin chains on proteins. The sequence is that of Peptidyl-prolyl cis-trans isomerase-like 2 (cyp8) from Aspergillus oryzae (strain ATCC 42149 / RIB 40) (Yellow koji mold).